Reading from the N-terminus, the 360-residue chain is sn-glycerol-3-phosphate import ATP-binding protein UgpC (360 aa).

The ABC transporter domain occupies 4 to 235 (LSLKGVRKSY…PATTFVASFI (232 aa)). 37–44 (GPSGCGKS) serves as a coordination point for ATP.

Belongs to the ABC transporter superfamily. sn-glycerol-3-phosphate importer (TC 3.A.1.1.3) family. In terms of assembly, the complex is composed of two ATP-binding proteins (UgpC), two transmembrane proteins (UgpA and UgpE) and a solute-binding protein (UgpB).

It is found in the cell inner membrane. It catalyses the reaction sn-glycerol 3-phosphate(out) + ATP + H2O = sn-glycerol 3-phosphate(in) + ADP + phosphate + H(+). Part of the ABC transporter complex UgpBAEC involved in sn-glycerol-3-phosphate (G3P) import. Responsible for energy coupling to the transport system. The protein is sn-glycerol-3-phosphate import ATP-binding protein UgpC of Burkholderia pseudomallei (strain 1710b).